A 119-amino-acid polypeptide reads, in one-letter code: Large ribosomal subunit protein uL18 (119 aa).

Belongs to the universal ribosomal protein uL18 family. In terms of assembly, part of the 50S ribosomal subunit; part of the 5S rRNA/L5/L18/L25 subcomplex. Contacts the 5S and 23S rRNAs.

This is one of the proteins that bind and probably mediate the attachment of the 5S RNA into the large ribosomal subunit, where it forms part of the central protuberance. The chain is Large ribosomal subunit protein uL18 from Clostridium perfringens (strain 13 / Type A).